Here is a 318-residue protein sequence, read N- to C-terminus: Cytochrome f (318 aa).

Residues 1-34 (MQNRNFFEYPKNWIILLIPIFTTFNLLFTSDCYA) form the signal peptide. 4 residues coordinate heme: Phe-35, Cys-55, Cys-58, and His-59. Residues 284 to 303 (LQGLLVFLFLVVLAQVFLVL) traverse the membrane as a helical segment.

This sequence belongs to the cytochrome f family. The 4 large subunits of the cytochrome b6-f complex are cytochrome b6, subunit IV (17 kDa polypeptide, petD), cytochrome f and the Rieske protein, while the 4 small subunits are PetG, PetL, PetM and PetN. The complex functions as a dimer. The cofactor is heme.

It is found in the plastid. The protein localises to the chloroplast thylakoid membrane. In terms of biological role, component of the cytochrome b6-f complex, which mediates electron transfer between photosystem II (PSII) and photosystem I (PSI), cyclic electron flow around PSI, and state transitions. The sequence is that of Cytochrome f from Chaetosphaeridium globosum (Charophycean green alga).